A 252-amino-acid chain; its full sequence is Vitamin B12 import ATP-binding protein BtuD (252 aa).

The ABC transporter domain occupies 2–237 (IQIKSLSVGA…EQLESVFNTQ (236 aa)). 30–37 (GPNGSGKS) lines the ATP pocket.

It belongs to the ABC transporter superfamily. Vitamin B12 importer (TC 3.A.1.13.1) family. As to quaternary structure, the complex is composed of two ATP-binding proteins (BtuD), two transmembrane proteins (BtuC) and a solute-binding protein (BtuF).

The protein resides in the cell inner membrane. It catalyses the reaction an R-cob(III)alamin(out) + ATP + H2O = an R-cob(III)alamin(in) + ADP + phosphate + H(+). Its function is as follows. Part of the ABC transporter complex BtuCDF involved in vitamin B12 import. Responsible for energy coupling to the transport system. The chain is Vitamin B12 import ATP-binding protein BtuD from Vibrio atlanticus (strain LGP32) (Vibrio splendidus (strain Mel32)).